The primary structure comprises 246 residues: Ribosomal RNA large subunit methyltransferase E (246 aa).

Residues Gly-81, Trp-83, Asp-104, Asp-120, and Asp-144 each contribute to the S-adenosyl-L-methionine site. The active-site Proton acceptor is the Lys-184.

This sequence belongs to the class I-like SAM-binding methyltransferase superfamily. RNA methyltransferase RlmE family.

Its subcellular location is the cytoplasm. The enzyme catalyses uridine(2552) in 23S rRNA + S-adenosyl-L-methionine = 2'-O-methyluridine(2552) in 23S rRNA + S-adenosyl-L-homocysteine + H(+). In terms of biological role, specifically methylates the uridine in position 2552 of 23S rRNA at the 2'-O position of the ribose in the fully assembled 50S ribosomal subunit. The polypeptide is Ribosomal RNA large subunit methyltransferase E (Agrobacterium fabrum (strain C58 / ATCC 33970) (Agrobacterium tumefaciens (strain C58))).